Consider the following 216-residue polypeptide: MSITAAQVNELRKVTGAGLMDCKKALTETGGDHEKAIDYLRTKGLAAASKKAGRAATEGLVGSYIHAGGKIGVLVEVNCETDFVAKNENFQAFVKDIAMHIAAASPLYVRREEVPAELIEREKAIYREKAKESGKPAAIIEKILDGQINKFFADICLLEQTYVKDPDKTIQTFLNETIASIGENMSIRRFAKFVLGEGLAKKESDFAAEVAAAVGQ.

The segment at 81 to 84 (TDFV) is involved in Mg(2+) ion dislocation from EF-Tu.

This sequence belongs to the EF-Ts family.

The protein resides in the cytoplasm. Its function is as follows. Associates with the EF-Tu.GDP complex and induces the exchange of GDP to GTP. It remains bound to the aminoacyl-tRNA.EF-Tu.GTP complex up to the GTP hydrolysis stage on the ribosome. This chain is Elongation factor Ts, found in Geobacter sp. (strain M21).